The following is a 155-amino-acid chain: Sperm microtubule associated protein 1 (155 aa).

The polypeptide is Sperm microtubule associated protein 1 (Spmap1) (Mus musculus (Mouse)).